A 400-amino-acid chain; its full sequence is Large envelope protein (400 aa).

Methionine 1 is subject to N-acetylmethionine. Glycine 2 carries N-myristoyl glycine; by host lipidation. The pre-S1 stretch occupies residues 2-119; the sequence is GAPLSTARRG…PPLRDTHPQA (118 aa). The interval 2 to 174 is pre-S; the sequence is GAPLSTARRG…FSKTGDPAMN (173 aa). The Virion surface; in external conformation segment spans residues 2-181; the sequence is GAPLSTARRG…AMNMENITSG (180 aa). At 2–253 the chain is on the intravirion; in internal conformation side; it reads GAPLSTARRG…PGYRWMCLRR (252 aa). Proline 4 is a glycosylation site (N-linked (GlcNAc...) asparagine). The disordered stretch occupies residues 70 to 115; it reads PHGGLLGWSPQAQGILTTSPPDPPPASTNRRSGRKPTPVSPPLRDT. Positions 79 to 88 are enriched in polar residues; the sequence is PQAQGILTTS. The segment at 120–174 is pre-S2; that stretch reads MQWNSTQFHQALLDPRVRGLYLPAGGSSSETQNPVPTIASLTSSIFSKTGDPAMN. A helical membrane pass occupies residues 182-202; sequence LLGPLLVLQAVCFLLTKILTI. Topologically, residues 203–253 are intravirion; in external conformation; it reads PQSLDSWWTSLNFLGVPPGCPGQNSQSPISNHLPTSCPPTCPGYRWMCLRR. A helical membrane pass occupies residues 254 to 274; it reads FIIFLFILLLCLIFLLVLLDY. Over 275 to 348 the chain is Virion surface; sequence QGMLPVCPLL…WASARFSWLS (74 aa). Asparagine 320 is a glycosylation site (N-linked (GlcNAc...) asparagine; by host). A helical membrane pass occupies residues 349 to 369; it reads LLVQFVQWCVGLSPTVWLLVI. Residues 370–375 lie on the Intravirion side of the membrane; sequence WMIWYW. A helical membrane pass occupies residues 376–398; sequence GPNLCSILSPFIPLLPIFCYLWA. Residues 399–400 lie on the Virion surface side of the membrane; that stretch reads SI.

This sequence belongs to the orthohepadnavirus major surface antigen family. In terms of assembly, in its internal form (Li-HBsAg), interacts with the capsid protein and with the isoform S. Interacts with host chaperone CANX. Associates with host chaperone CANX through its pre-S2 N glycan; this association may be essential for isoform M proper secretion. As to quaternary structure, interacts with isoform L. Interacts with the antigens of satellite virus HDV (HDVAgs); this interaction is required for encapsidation of HDV genomic RNA. In terms of processing, isoform M is N-terminally acetylated by host at a ratio of 90%, and N-glycosylated by host at the pre-S2 region. Post-translationally, myristoylated.

The protein localises to the virion membrane. Functionally, the large envelope protein exists in two topological conformations, one which is termed 'external' or Le-HBsAg and the other 'internal' or Li-HBsAg. In its external conformation the protein attaches the virus to cell receptors and thereby initiating infection. This interaction determines the species specificity and liver tropism. This attachment induces virion internalization predominantly through caveolin-mediated endocytosis. The large envelope protein also assures fusion between virion membrane and endosomal membrane. In its internal conformation the protein plays a role in virion morphogenesis and mediates the contact with the nucleocapsid like a matrix protein. Its function is as follows. The middle envelope protein plays an important role in the budding of the virion. It is involved in the induction of budding in a nucleocapsid independent way. In this process the majority of envelope proteins bud to form subviral lipoprotein particles of 22 nm of diameter that do not contain a nucleocapsid. The sequence is that of Large envelope protein from Hepatitis B virus genotype H subtype adw4 (isolate Nicaragua/2928Nic/1997) (HBV-H).